A 216-amino-acid polypeptide reads, in one-letter code: Ras-related protein RABA1a (216 aa).

20–27 contributes to the GTP binding site; it reads GDSGVGKS. The Effector region motif lies at 42 to 50; the sequence is SKSTIGVEF. Residues 68–72, 126–129, and 156–157 each bind GTP; these read DTAGQ, NKCD, and SA. S-geranylgeranyl cysteine attachment occurs at residues Cys213 and Cys214.

The protein belongs to the small GTPase superfamily. Rab family.

The protein resides in the cell membrane. Functionally, involved in auxin-mediated response. May be involved in vesicle trafficking of components involved in polar auxin transport. Binds GTP and GDP and possesses intrinsic GTPase activity. The chain is Ras-related protein RABA1a (RABA1A) from Arabidopsis thaliana (Mouse-ear cress).